The following is a 192-amino-acid chain: Per os infectivity factor 6 (192 aa).

The chain crosses the membrane as a helical span at residues 154 to 174; that stretch reads IAYVFLFFICIVLLSVLAVFF.

The protein resides in the host membrane. Its subcellular location is the virion. It is found in the host cytoplasm. It localises to the host nucleus. Per os infectivity factor. The protein is Per os infectivity factor 6 (AC68) of Autographa californica nuclear polyhedrosis virus (AcMNPV).